We begin with the raw amino-acid sequence, 202 residues long: MARSFAQLARSAEKSSSSIAVPKEPLETAPLDIHTLGDDALRGDARRIGKVDERVRDLARDMLRSMYTASGIGLAAPQVGVHQQLLVIDLDFETPSTPPLVLINPEITTCSASVDTYEEGCLSIPGVYLDVVRPTAIQLSFRDEMGRPRTMKADGLMARCIQHEMDHLRGVLFVDRVTDAGGLKKELKDHGFLATDVRPITP.

Residues Cys121 and His163 each coordinate Fe cation. Glu164 is a catalytic residue. His167 serves as a coordination point for Fe cation.

This sequence belongs to the polypeptide deformylase family. Requires Fe(2+) as cofactor.

It catalyses the reaction N-terminal N-formyl-L-methionyl-[peptide] + H2O = N-terminal L-methionyl-[peptide] + formate. Its function is as follows. Removes the formyl group from the N-terminal Met of newly synthesized proteins. Requires at least a dipeptide for an efficient rate of reaction. N-terminal L-methionine is a prerequisite for activity but the enzyme has broad specificity at other positions. This is Peptide deformylase from Synechococcus sp. (strain CC9311).